The primary structure comprises 293 residues: 4-hydroxy-tetrahydrodipicolinate synthase (293 aa).

Threonine 47 is a pyruvate binding site. Catalysis depends on tyrosine 136, which acts as the Proton donor/acceptor. Residue lysine 164 is the Schiff-base intermediate with substrate of the active site. Isoleucine 206 is a binding site for pyruvate.

Belongs to the DapA family. In terms of assembly, homotetramer; dimer of dimers.

It is found in the cytoplasm. The catalysed reaction is L-aspartate 4-semialdehyde + pyruvate = (2S,4S)-4-hydroxy-2,3,4,5-tetrahydrodipicolinate + H2O + H(+). Its pathway is amino-acid biosynthesis; L-lysine biosynthesis via DAP pathway; (S)-tetrahydrodipicolinate from L-aspartate: step 3/4. Its function is as follows. Catalyzes the condensation of (S)-aspartate-beta-semialdehyde [(S)-ASA] and pyruvate to 4-hydroxy-tetrahydrodipicolinate (HTPA). This chain is 4-hydroxy-tetrahydrodipicolinate synthase, found in Listeria monocytogenes serovar 1/2a (strain ATCC BAA-679 / EGD-e).